A 192-amino-acid polypeptide reads, in one-letter code: Adenylate kinase (192 aa).

ATP is bound at residue 12–17 (GSGKTT). Residues 34 to 63 (STGDLLRAEVASGSELGKTIDSFISKGNLV) form an NMP region. AMP is bound by residues Thr35, Arg40, 61–63 (NLV), 88–91 (GYPR), and Gln95. The segment at 130–136 (GRNRGAD) is LID. Arg131 is a binding site for ATP. 2 residues coordinate AMP: Arg133 and Arg145. ATP is bound at residue Arg173.

Belongs to the adenylate kinase family. In terms of assembly, monomer.

The protein resides in the cytoplasm. It carries out the reaction AMP + ATP = 2 ADP. Its pathway is purine metabolism; AMP biosynthesis via salvage pathway; AMP from ADP: step 1/1. Its function is as follows. Catalyzes the reversible transfer of the terminal phosphate group between ATP and AMP. Plays an important role in cellular energy homeostasis and in adenine nucleotide metabolism. In Campylobacter jejuni subsp. jejuni serotype O:6 (strain 81116 / NCTC 11828), this protein is Adenylate kinase.